Here is a 286-residue protein sequence, read N- to C-terminus: MEKRENPYLRYLRRERLPHIFCAGCGNGIVLNSFFKGMEMAGIDFDNIAMVSGIGCSSRIPGYVNCDSLHTTHGRPISFATGLKLGNPSLDVVVFTGDGDAAAIGGNHLIHGARRNIDMTVICINNSIYGMTGGQISPTFPEGSYGSTAPYGALEDPFDLAELVTAAGASYVARWTTAHPLQLANSIKKGLKNRGFSFIEAISQCPTYFGRKNRMRSPVEMMRFMKENSLNRRKALKMEPDEVEGKIIVGEFANRPQPELCEKICSMVDEKSGRALDMIRSAYRDD.

As to quaternary structure, heterotetramer of the KorA, KorB, KorC and KorD subunits.

The enzyme catalyses 2 oxidized [2Fe-2S]-[ferredoxin] + 2-oxoglutarate + CoA = succinyl-CoA + 2 reduced [2Fe-2S]-[ferredoxin] + CO2 + H(+). The chain is 2-oxoglutarate synthase subunit KorB (korB) from Methanothermobacter thermautotrophicus (strain ATCC 29096 / DSM 1053 / JCM 10044 / NBRC 100330 / Delta H) (Methanobacterium thermoautotrophicum).